The chain runs to 121 residues: Large ribosomal subunit protein uL14 (121 aa).

This sequence belongs to the universal ribosomal protein uL14 family. Part of the 50S ribosomal subunit. Forms a cluster with proteins L3 and L19. In the 70S ribosome, L14 and L19 interact and together make contacts with the 16S rRNA in bridges B5 and B8.

In terms of biological role, binds to 23S rRNA. Forms part of two intersubunit bridges in the 70S ribosome. This is Large ribosomal subunit protein uL14 from Prochlorococcus marinus (strain SARG / CCMP1375 / SS120).